The primary structure comprises 271 residues: Tryptophan synthase alpha chain (271 aa).

Catalysis depends on proton acceptor residues E49 and D60.

This sequence belongs to the TrpA family. Tetramer of two alpha and two beta chains.

The catalysed reaction is (1S,2R)-1-C-(indol-3-yl)glycerol 3-phosphate + L-serine = D-glyceraldehyde 3-phosphate + L-tryptophan + H2O. Its pathway is amino-acid biosynthesis; L-tryptophan biosynthesis; L-tryptophan from chorismate: step 5/5. In terms of biological role, the alpha subunit is responsible for the aldol cleavage of indoleglycerol phosphate to indole and glyceraldehyde 3-phosphate. This Azoarcus sp. (strain BH72) protein is Tryptophan synthase alpha chain.